Here is a 326-residue protein sequence, read N- to C-terminus: Beta-ketoacyl-[acyl-carrier-protein] synthase III (326 aa).

Active-site residues include C111 and H253. Positions 254-258 are ACP-binding; sequence QANSR. N283 is a catalytic residue.

This sequence belongs to the thiolase-like superfamily. FabH family. As to quaternary structure, homodimer.

The protein localises to the cytoplasm. It carries out the reaction malonyl-[ACP] + acetyl-CoA + H(+) = 3-oxobutanoyl-[ACP] + CO2 + CoA. It participates in lipid metabolism; fatty acid biosynthesis. Functionally, catalyzes the condensation reaction of fatty acid synthesis by the addition to an acyl acceptor of two carbons from malonyl-ACP. Catalyzes the first condensation reaction which initiates fatty acid synthesis and may therefore play a role in governing the total rate of fatty acid production. Possesses both acetoacetyl-ACP synthase and acetyl transacylase activities. Its substrate specificity determines the biosynthesis of branched-chain and/or straight-chain of fatty acids. This Latilactobacillus sakei subsp. sakei (strain 23K) (Lactobacillus sakei subsp. sakei) protein is Beta-ketoacyl-[acyl-carrier-protein] synthase III.